The chain runs to 153 residues: Calmodulin-like protein 4 (153 aa).

EF-hand domains follow at residues 8-43 (DQIN…LGAS), 44-79 (PTPG…QIKQ), 81-116 (DPKK…LGEK), and 117-152 (LTHK…PVRD).

The protein belongs to the calmodulin family. In terms of assembly, interacts with MYO7B; the interaction mediates the association of CALML4 with the IMAC/intermicrovillar adhesion complex. Interacts with MYO7A.

It localises to the cell projection. The protein localises to the microvillus. As part of the intermicrovillar adhesion complex/IMAC plays a role in epithelial brush border differentiation, controlling microvilli organization and length. Acts as a light chain for MYO7B and is required for efficient targeting of the IMAC to the tips of border brush microvilli. In Bos taurus (Bovine), this protein is Calmodulin-like protein 4 (CALML4).